The following is a 249-amino-acid chain: Orotidine 5'-phosphate decarboxylase (249 aa).

Substrate-binding positions include aspartate 21, lysine 43, 72 to 81 (DLKLYDIPET), threonine 128, arginine 193, glutamine 204, glycine 224, and arginine 225. Catalysis depends on lysine 74, which acts as the Proton donor.

It belongs to the OMP decarboxylase family. Type 1 subfamily. In terms of assembly, homodimer.

It carries out the reaction orotidine 5'-phosphate + H(+) = UMP + CO2. The protein operates within pyrimidine metabolism; UMP biosynthesis via de novo pathway; UMP from orotate: step 2/2. In terms of biological role, catalyzes the decarboxylation of orotidine 5'-monophosphate (OMP) to uridine 5'-monophosphate (UMP). This chain is Orotidine 5'-phosphate decarboxylase, found in Desulfosudis oleivorans (strain DSM 6200 / JCM 39069 / Hxd3) (Desulfococcus oleovorans).